The chain runs to 450 residues: Adenosylhomocysteinase (450 aa).

3 residues coordinate substrate: Thr59, Asp135, and Glu160. 161–163 is an NAD(+) binding site; the sequence is TTT. Substrate-binding residues include Lys190 and Asp194. NAD(+) is bound by residues Asn195, 224-229, Glu247, 303-305, and Asn350; these read GFGDVG and IGH.

It belongs to the adenosylhomocysteinase family. The cofactor is NAD(+).

It is found in the cytoplasm. It catalyses the reaction S-adenosyl-L-homocysteine + H2O = L-homocysteine + adenosine. Its pathway is amino-acid biosynthesis; L-homocysteine biosynthesis; L-homocysteine from S-adenosyl-L-homocysteine: step 1/1. In terms of biological role, adenosylhomocysteine is a competitive inhibitor of S-adenosyl-L-methionine-dependent methyl transferase reactions; therefore adenosylhomocysteinase may play a key role in the control of methylations via regulation of the intracellular concentration of adenosylhomocysteine. The polypeptide is Adenosylhomocysteinase (SAH1) (Candida albicans (strain SC5314 / ATCC MYA-2876) (Yeast)).